Here is a 485-residue protein sequence, read N- to C-terminus: Zinc finger protein 165 (485 aa).

K23 is covalently cross-linked (Glycyl lysine isopeptide (Lys-Gly) (interchain with G-Cter in SUMO2)). The SCAN box domain maps to 62 to 127; the sequence is GPREALSRLR…EEAVTILEDL (66 aa). Glycyl lysine isopeptide (Lys-Gly) (interchain with G-Cter in SUMO2) cross-links involve residues K162 and K195. A C2H2-type 1; degenerate zinc finger spans residues 290 to 314; that stretch reads KSCKHGTCDQSFKWNSDFINHQIIY. C2H2-type zinc fingers lie at residues 344–366, 372–394, 400–422, 428–450, and 456–478; these read HQCNECGKAFRHSSKLARHQRIH, YECNECGKSFAESSDLTRHRRIH, FGCKECGRAFNLNSHLIRHQRIH, YECSECGKTFRVSSHLIRHFRIH, and YECSECGRAFSQSSNLSQHQRIH.

This sequence belongs to the krueppel C2H2-type zinc-finger protein family. In terms of tissue distribution, expressed specifically in testis.

The protein localises to the nucleus. Functionally, may be involved in transcriptional regulation. This Homo sapiens (Human) protein is Zinc finger protein 165 (ZNF165).